Reading from the N-terminus, the 318-residue chain is NADH-ubiquinone oxidoreductase chain 1 (318 aa).

The next 8 helical transmembrane spans lie at 2–22, 76–96, 98–118, 140–160, 171–191, 217–237, 253–273, and 294–314; these read FMVN…FLTL, TLAL…HPLI, FNLG…SILW, ISYE…SGSF, HSWL…STLA, AGSF…MNAL, ELYT…FLWI, and LPLT…TSGI.

Belongs to the complex I subunit 1 family. As to quaternary structure, core subunit of respiratory chain NADH dehydrogenase (Complex I) which is composed of 45 different subunits.

It localises to the mitochondrion inner membrane. It catalyses the reaction a ubiquinone + NADH + 5 H(+)(in) = a ubiquinol + NAD(+) + 4 H(+)(out). Functionally, core subunit of the mitochondrial membrane respiratory chain NADH dehydrogenase (Complex I) which catalyzes electron transfer from NADH through the respiratory chain, using ubiquinone as an electron acceptor. Essential for the catalytic activity and assembly of complex I. The polypeptide is NADH-ubiquinone oxidoreductase chain 1 (MT-ND1) (Ateles paniscus (Black spider monkey)).